Consider the following 379-residue polypeptide: uncharacterized protein (379 aa).

This is an uncharacterized protein from Shouchella clausii (Alkalihalobacillus clausii).